The primary structure comprises 154 residues: Catabolic 3-dehydroquinase (154 aa).

Tyr-25 (proton acceptor) is an active-site residue. 3 residues coordinate substrate: Asn-79, His-85, and Asp-92. Catalysis depends on His-105, which acts as the Proton donor. Substrate is bound by residues 106 to 107 (IS) and Arg-116.

This sequence belongs to the type-II 3-dehydroquinase family. In terms of assembly, homododecamer. Adopts a ring-like structure, composed of an arrangement of two hexameric rings stacked on top of one another.

The enzyme catalyses 3-dehydroquinate = 3-dehydroshikimate + H2O. It functions in the pathway aromatic compound metabolism; 3,4-dihydroxybenzoate biosynthesis; 3,4-dihydroxybenzoate from 3-dehydroquinate: step 1/2. Is involved in the catabolism of quinate. Allows the utilization of quinate as carbon source via the beta-ketoadipate pathway. The protein is Catabolic 3-dehydroquinase of Sclerotinia sclerotiorum (strain ATCC 18683 / 1980 / Ss-1) (White mold).